Reading from the N-terminus, the 665-residue chain is Succinate dehydrogenase [ubiquinone] flavoprotein subunit B, mitochondrial (665 aa).

A mitochondrion-targeting transit peptide spans 1–45; it reads MALLKVAPSRLLSRALQLTSTLQNCTATSIAARRNFHFTVYGRKD. FAD is bound by residues Ala72, Ala75, Thr94, Lys95, and Ser101. A Tele-8alpha-FAD histidine modification is found at His102. The FAD site is built by Thr103, Gly108, Ala224, and Asp278. Residues His299, Arg343, and His410 each coordinate oxaloacetate. Arg343 (proton acceptor) is an active-site residue. Position 443 (Glu443) interacts with FAD. Oxaloacetate is bound by residues Arg454 and Ala457. Residues Ser459 and Leu460 each coordinate FAD.

It belongs to the FAD-dependent oxidoreductase 2 family. FRD/SDH subfamily. As to quaternary structure, component of complex II composed of four subunits: a flavoprotein (FP), an iron-sulfur protein (IP), and a cytochrome b composed of a large and a small subunit. It depends on FAD as a cofactor.

The protein localises to the mitochondrion inner membrane. It catalyses the reaction a ubiquinone + succinate = a ubiquinol + fumarate. It carries out the reaction (R)-malate + a quinone = enol-oxaloacetate + a quinol. The enzyme catalyses (S)-malate + a quinone = enol-oxaloacetate + a quinol. It participates in carbohydrate metabolism; tricarboxylic acid cycle; fumarate from succinate (eukaryal route): step 1/1. With respect to regulation, enol-oxaloacetate inhibits the succinate dehydrogenase activity. Its function is as follows. Flavoprotein (FP) subunit of succinate dehydrogenase (SDH) that is involved in complex II of the mitochondrial electron transport chain and is responsible for transferring electrons from succinate to ubiquinone (coenzyme Q). SDH also oxidizes malate to the non-canonical enol form of oxaloacetate, enol-oxaloacetate. Enol-oxaloacetate, which is a potent inhibitor of the succinate dehydrogenase activity, is further isomerized into keto-oxaloacetate. The polypeptide is Succinate dehydrogenase [ubiquinone] flavoprotein subunit B, mitochondrial (sdha-b) (Xenopus laevis (African clawed frog)).